The following is a 335-amino-acid chain: Vitamin B12 import system permease protein BtuC (335 aa).

Transmembrane regions (helical) follow at residues phenylalanine 21–tryptophan 43, phenylalanine 63–valine 82, glycine 95–phenylalanine 114, proline 119–phenylalanine 141, leucine 153–threonine 175, tryptophan 195–serine 212, phenylalanine 244–valine 266, threonine 281–leucine 303, and valine 310–leucine 329.

This sequence belongs to the binding-protein-dependent transport system permease family. FecCD subfamily. The complex is composed of two ATP-binding proteins (BtuD), two transmembrane proteins (BtuC) and a solute-binding protein (BtuF).

The protein localises to the cell inner membrane. Functionally, part of the ABC transporter complex BtuCDF involved in vitamin B12 import. Involved in the translocation of the substrate across the membrane. The polypeptide is Vitamin B12 import system permease protein BtuC (Photorhabdus laumondii subsp. laumondii (strain DSM 15139 / CIP 105565 / TT01) (Photorhabdus luminescens subsp. laumondii)).